The primary structure comprises 180 residues: Large ribosomal subunit protein uL6 (180 aa).

It belongs to the universal ribosomal protein uL6 family. Part of the 50S ribosomal subunit.

In terms of biological role, this protein binds to the 23S rRNA, and is important in its secondary structure. It is located near the subunit interface in the base of the L7/L12 stalk, and near the tRNA binding site of the peptidyltransferase center. The protein is Large ribosomal subunit protein uL6 of Anaeromyxobacter dehalogenans (strain 2CP-C).